Reading from the N-terminus, the 151-residue chain is Ubiquitin-conjugating enzyme E2 W (151 aa).

M1 is covalently cross-linked (Peptide (Met-Gly) (interchain with G-Cter in ubiquitin)). The UBC core domain occupies S3–C151. C91 acts as the Glycyl thioester intermediate in catalysis.

This sequence belongs to the ubiquitin-conjugating enzyme family. As to quaternary structure, homodimer. Interacts with FANCL. Interacts with STUB1/CHIP. In terms of processing, ubiquitinated in vitro in the presence of FANCL. Autoubiquitinated at Met-1.

It localises to the nucleus. The enzyme catalyses S-ubiquitinyl-[E1 ubiquitin-activating enzyme]-L-cysteine + [E2 ubiquitin-conjugating enzyme]-L-cysteine = [E1 ubiquitin-activating enzyme]-L-cysteine + S-ubiquitinyl-[E2 ubiquitin-conjugating enzyme]-L-cysteine.. The catalysed reaction is S-ubiquitinyl-[E1 ubiquitin-activating enzyme]-L-cysteine + [acceptor protein]-N-terminal-amino acid = [E1 ubiquitin-activating enzyme]-L-cysteine + N-terminal-ubiquitinyl-[acceptor protein].. It participates in protein modification; protein ubiquitination. Its function is as follows. Accepts ubiquitin from the E1 complex and catalyzes its covalent attachment to other proteins. Specifically monoubiquitinates the N-terminus of various substrates, including ATXN3, MAPT/TAU, POLR2H/RPB8 and STUB1/CHIP, by recognizing backbone atoms of disordered N-termini. Involved in degradation of misfolded chaperone substrates by mediating monoubiquitination of STUB1/CHIP, leading to recruitment of ATXN3 to monoubiquitinated STUB1/CHIP, and restriction of the length of ubiquitin chain attached to STUB1/CHIP substrates by ATXN3. After UV irradiation, but not after mitomycin-C (MMC) treatment, acts as a specific E2 ubiquitin-conjugating enzyme for the Fanconi anemia complex by associating with E3 ubiquitin-protein ligase FANCL and catalyzing monoubiquitination of FANCD2, a key step in the DNA damage pathway. In vitro catalyzes 'Lys-11'-linked polyubiquitination. UBE2W-catalyzed ubiquitination also occurs in the presence of inactive RING/U-box type E3s, i.e. lacking the active site cysteine residues to form thioester bonds with ubiquitin, or even in the absence of E3, albeit at a slower rate. This chain is Ubiquitin-conjugating enzyme E2 W (UBE2W), found in Bos taurus (Bovine).